A 217-amino-acid polypeptide reads, in one-letter code: 3,4-dihydroxy-2-butanone 4-phosphate synthase (217 aa).

D-ribulose 5-phosphate-binding positions include 37-38, Asp42, 150-154, and Glu174; these read RE and RGGHT. Glu38 provides a ligand contact to Mg(2+). A Mg(2+)-binding site is contributed by His153.

It belongs to the DHBP synthase family. Homodimer. Mg(2+) is required as a cofactor. Mn(2+) serves as cofactor.

It catalyses the reaction D-ribulose 5-phosphate = (2S)-2-hydroxy-3-oxobutyl phosphate + formate + H(+). It functions in the pathway cofactor biosynthesis; riboflavin biosynthesis; 2-hydroxy-3-oxobutyl phosphate from D-ribulose 5-phosphate: step 1/1. Functionally, catalyzes the conversion of D-ribulose 5-phosphate to formate and 3,4-dihydroxy-2-butanone 4-phosphate. The polypeptide is 3,4-dihydroxy-2-butanone 4-phosphate synthase (Pectobacterium carotovorum subsp. carotovorum (strain PC1)).